Here is a 417-residue protein sequence, read N- to C-terminus: Lipoyl synthase, mitochondrial (417 aa).

The transit peptide at 1–30 (MATSIPRSRCFLTSSTLKVVPRSRTPLRSF) directs the protein to the mitochondrion. Positions 23–62 (SRTPLRSFATTSDTPQTSVPEAPGKRSRPPTSFSDTLNAG) are disordered. Polar residues-rich tracts occupy residues 30–41 (FATTSDTPQTSV) and 51–61 (PPTSFSDTLNA). The [4Fe-4S] cluster site is built by C132, C137, C143, C163, C167, C170, and S378. The Radical SAM core domain maps to 146–367 (GSSKSAATAT…RQRALDMGFL (222 aa)).

This sequence belongs to the radical SAM superfamily. Lipoyl synthase family. The cofactor is [4Fe-4S] cluster.

The protein resides in the mitochondrion. It catalyses the reaction [[Fe-S] cluster scaffold protein carrying a second [4Fe-4S](2+) cluster] + N(6)-octanoyl-L-lysyl-[protein] + 2 oxidized [2Fe-2S]-[ferredoxin] + 2 S-adenosyl-L-methionine + 4 H(+) = [[Fe-S] cluster scaffold protein] + N(6)-[(R)-dihydrolipoyl]-L-lysyl-[protein] + 4 Fe(3+) + 2 hydrogen sulfide + 2 5'-deoxyadenosine + 2 L-methionine + 2 reduced [2Fe-2S]-[ferredoxin]. It participates in protein modification; protein lipoylation via endogenous pathway; protein N(6)-(lipoyl)lysine from octanoyl-[acyl-carrier-protein]: step 2/2. Functionally, catalyzes the radical-mediated insertion of two sulfur atoms into the C-6 and C-8 positions of the octanoyl moiety bound to the lipoyl domains of lipoate-dependent enzymes, thereby converting the octanoylated domains into lipoylated derivatives. The protein is Lipoyl synthase, mitochondrial of Pyrenophora tritici-repentis (strain Pt-1C-BFP) (Wheat tan spot fungus).